The following is a 193-amino-acid chain: CD70 antigen (193 aa).

Residues M1 to C17 lie on the Cytoplasmic side of the membrane. A helical; Signal-anchor for type II membrane protein membrane pass occupies residues V18–I38. The Extracellular segment spans residues Q39–P193. One can recognise a THD domain in the interval D56 to V191. Residue N63 is glycosylated (N-linked (GlcNAc...) asparagine). 2 disulfides stabilise this stretch: C115/C151 and C133/C168. N170 is a glycosylation site (N-linked (GlcNAc...) asparagine).

Belongs to the tumor necrosis factor family. In terms of assembly, homotrimer. In terms of processing, N-glycosylated.

Its subcellular location is the cell membrane. Expressed at the plasma membrane of B cells, it is the ligand of the CD27 receptor which is specifically expressed at the surface of T cells. The CD70-CD27 signaling pathway mediates antigen-specific T cell activation and expansion which in turn provides immune surveillance of B cells. In Homo sapiens (Human), this protein is CD70 antigen.